We begin with the raw amino-acid sequence, 370 residues long: Chorismate synthase (370 aa).

Arginine 48 lines the NADP(+) pocket. FMN-binding positions include 125–127 (RSS), 241–242 (NA), glycine 285, 300–304 (KPTSS), and arginine 326.

Belongs to the chorismate synthase family. Homotetramer. FMNH2 serves as cofactor.

It catalyses the reaction 5-O-(1-carboxyvinyl)-3-phosphoshikimate = chorismate + phosphate. It participates in metabolic intermediate biosynthesis; chorismate biosynthesis; chorismate from D-erythrose 4-phosphate and phosphoenolpyruvate: step 7/7. Its function is as follows. Catalyzes the anti-1,4-elimination of the C-3 phosphate and the C-6 proR hydrogen from 5-enolpyruvylshikimate-3-phosphate (EPSP) to yield chorismate, which is the branch point compound that serves as the starting substrate for the three terminal pathways of aromatic amino acid biosynthesis. This reaction introduces a second double bond into the aromatic ring system. The chain is Chorismate synthase from Jannaschia sp. (strain CCS1).